The following is an 804-amino-acid chain: Leucine--tRNA ligase (804 aa).

The 'HIGH' region signature appears at 40–51 (PYPSGAGLHVGH). Positions 574-578 (KMSKS) match the 'KMSKS' region motif. ATP is bound at residue Lys577.

It belongs to the class-I aminoacyl-tRNA synthetase family.

The protein resides in the cytoplasm. The enzyme catalyses tRNA(Leu) + L-leucine + ATP = L-leucyl-tRNA(Leu) + AMP + diphosphate. This Shouchella clausii (strain KSM-K16) (Alkalihalobacillus clausii) protein is Leucine--tRNA ligase.